A 456-amino-acid chain; its full sequence is Iroquois-class homeodomain protein irx-2 (456 aa).

The segment at residues 110–172 (DPAYRKNATR…NARRRLKKEN (63 aa)) is a DNA-binding region (homeobox; TALE-type). Disordered regions lie at residues 172-214 (NKMT…AEDE), 246-320 (CESG…PASK), and 434-456 (RPTN…QPYP). Basic and acidic residues-rich tracts occupy residues 192–205 (GERV…KAQD) and 246–256 (CESGSESKEKY). The segment covering 257-269 (DDDEDEEEGDEED) has biased composition (acidic residues). Residues 291-318 (NHQQDGSPRNSNKTSLDNGMSPSSQTPA) show a composition bias toward polar residues.

It belongs to the TALE/IRO homeobox family. As to expression, expressed in the neural plate in overlapping patterns with other irx members, which all share an anterior border of expression. Also expressed in the placodes. Broadly expressed in the tailbud rhombencephalon (hindbrain). Outside the nervous system and at tailbud stages, expressed in the developing otic vesicle, branchial arches, prospective heart region and pronephros.

It localises to the nucleus. Acts partially redundantly with other irx members in neural patterning. Required for formation of the posterior forebrain, midbrain, hindbrain, and to a lesser extent, spinal cord. Acts early in neural plate development to induce expression of some but not all proneural genes, and specify a neural precursor state. Also up-regulates repressors that prevent neuronal differentiation. Patterns the neuroectoderm in both the anterior/posterior and dorsal/ventral axes. Probably dispensable for pronephric kidney development. The polypeptide is Iroquois-class homeodomain protein irx-2 (Xenopus tropicalis (Western clawed frog)).